The primary structure comprises 370 residues: Chaperone protein DnaJ (370 aa).

The 65-residue stretch at 4–68 (DYYQVLGVSK…QKRAAYDRFG (65 aa)) folds into the J domain. Residues 133-211 (GIEKNISFSS…CHGMGRYHKQ (79 aa)) form a CR-type zinc finger. Positions 146, 149, 163, 166, 185, 188, 199, and 202 each coordinate Zn(2+). 4 CXXCXGXG motif repeats span residues 146 to 153 (CDACHGTG), 163 to 170 (CDSCGGVG), 185 to 192 (CHKCQGNG), and 199 to 206 (CKKCHGMG).

It belongs to the DnaJ family. Homodimer. Requires Zn(2+) as cofactor.

It is found in the cytoplasm. Functionally, participates actively in the response to hyperosmotic and heat shock by preventing the aggregation of stress-denatured proteins and by disaggregating proteins, also in an autonomous, DnaK-independent fashion. Unfolded proteins bind initially to DnaJ; upon interaction with the DnaJ-bound protein, DnaK hydrolyzes its bound ATP, resulting in the formation of a stable complex. GrpE releases ADP from DnaK; ATP binding to DnaK triggers the release of the substrate protein, thus completing the reaction cycle. Several rounds of ATP-dependent interactions between DnaJ, DnaK and GrpE are required for fully efficient folding. Also involved, together with DnaK and GrpE, in the DNA replication of plasmids through activation of initiation proteins. The protein is Chaperone protein DnaJ of Rickettsia typhi (strain ATCC VR-144 / Wilmington).